The sequence spans 199 residues: Holliday junction branch migration complex subunit RuvA (199 aa).

The interval 1-64 is domain I; that stretch reads MFAYIKGTVE…EDIAVLYGFG (64 aa). Residues 65 to 143 form a domain II region; the sequence is TVEELTMFEM…KEQLTSSIPM (79 aa). Residues 144-151 form a flexible linker region; the sequence is TSPENNEV. Residues 152–199 form a domain III region; it reads TGDSVLSEAVSALMVLGYGSAEASSTISGIYEKGISVEELVKKALKSL.

It belongs to the RuvA family. Homotetramer. Forms an RuvA(8)-RuvB(12)-Holliday junction (HJ) complex. HJ DNA is sandwiched between 2 RuvA tetramers; dsDNA enters through RuvA and exits via RuvB. An RuvB hexamer assembles on each DNA strand where it exits the tetramer. Each RuvB hexamer is contacted by two RuvA subunits (via domain III) on 2 adjacent RuvB subunits; this complex drives branch migration. In the full resolvosome a probable DNA-RuvA(4)-RuvB(12)-RuvC(2) complex forms which resolves the HJ.

It localises to the cytoplasm. In terms of biological role, the RuvA-RuvB-RuvC complex processes Holliday junction (HJ) DNA during genetic recombination and DNA repair, while the RuvA-RuvB complex plays an important role in the rescue of blocked DNA replication forks via replication fork reversal (RFR). RuvA specifically binds to HJ cruciform DNA, conferring on it an open structure. The RuvB hexamer acts as an ATP-dependent pump, pulling dsDNA into and through the RuvAB complex. HJ branch migration allows RuvC to scan DNA until it finds its consensus sequence, where it cleaves and resolves the cruciform DNA. In Ruminiclostridium cellulolyticum (strain ATCC 35319 / DSM 5812 / JCM 6584 / H10) (Clostridium cellulolyticum), this protein is Holliday junction branch migration complex subunit RuvA.